Consider the following 1430-residue polypeptide: 3'-5' RNA helicase YTHDC2 (1430 aa).

The interval 1-37 (MSRPSSVSPRQPAPGGGGGGGPSPCGPGGGGRAKGLK) is disordered. Residues 14-33 (PGGGGGGGPSPCGPGGGGRA) show a composition bias toward gly residues. The R3H domain maps to 38–106 (DIRIDEEVKI…NRYLTVKKKD (69 aa)). Residues 203–369 (VKIIKENKVV…FGSCPVIYIQ (167 aa)) form the Helicase ATP-binding domain. Residue 216–223 (GETGSGKT) coordinates ATP. The short motif at 316–319 (DEVH) is the DEAH box element. ANK repeat units follow at residues 506–538 (TSATALMVAAGRGFASQVEQLISMGANVHSKAS) and 539–571 (NGWMALDWAKHFGQTEIVDLLESYSASLEFGNL). One can recognise a Helicase C-terminal domain in the interval 612–784 (LLYNICHSCD…ELCLHTKLLA (173 aa)). Phosphoserine is present on residues S1089, S1090, and S1092. Residues 1164-1174 (EQSAGLQQPSG) show a composition bias toward polar residues. The segment at 1164 to 1288 (EQSAGLQQPS…SPSPRPNMPV (125 aa)) is disordered. Over residues 1191–1200 (SSWRSNNSRK) the composition is skewed to low complexity. S1202 bears the Phosphoserine mark. Over residues 1231-1249 (KYKDRGILHPKRGTEDRSD) the composition is skewed to basic and acidic residues. The segment covering 1250 to 1264 (QSSVKSTDSSSYPSP) has biased composition (low complexity). Residues S1263, S1267, and S1281 each carry the phosphoserine modification. One can recognise a YTH domain in the interval 1288–1418 (VRYFIMKSSN…QVGEQLLQLW (131 aa)). Residues 1294 to 1296 (KSS), W1310, and W1360 each bind RNA.

It belongs to the DEAD box helicase family. DEAH subfamily. Interacts with MEIOC; binds transcripts that regulate the mitotic cell cycle inhibiting progression into metaphase, thereby allowing meiotic prophase to proceed normally. Interacts (via ANK repeats) with XRN1. Interacts with ZCCHC4. Associates with the small ribosomal subunit. Interacts with RBM46.

It localises to the cytoplasm. The protein localises to the perinuclear region. The catalysed reaction is ATP + H2O = ADP + phosphate + H(+). Its function is as follows. 3'-5' RNA helicase that plays a key role in the male and female germline by promoting transition from mitotic to meiotic divisions in stem cells. Specifically recognizes and binds N6-methyladenosine (m6A)-containing RNAs, a modification present at internal sites of mRNAs and some non-coding RNAs that plays a role in the efficiency of RNA processing and stability. Essential for ensuring a successful progression of the meiotic program in the germline by regulating the level of m6A-containing RNAs. Acts by binding and promoting degradation of m6A-containing mRNAs: the 3'-5' RNA helicase activity is required for this process and RNA degradation may be mediated by XRN1 exoribonuclease. Required for both spermatogenesis and oogenesis. The sequence is that of 3'-5' RNA helicase YTHDC2 from Pongo abelii (Sumatran orangutan).